The chain runs to 49 residues: Large ribosomal subunit protein bL33 (49 aa).

The protein belongs to the bacterial ribosomal protein bL33 family.

The protein is Large ribosomal subunit protein bL33 of Streptococcus pyogenes serotype M18 (strain MGAS8232).